Here is a 220-residue protein sequence, read N- to C-terminus: uncharacterized protein (220 aa).

This is an uncharacterized protein from Archaeoglobus fulgidus (strain ATCC 49558 / DSM 4304 / JCM 9628 / NBRC 100126 / VC-16).